Consider the following 161-residue polypeptide: MTALRIGNGYDIHRLVGDRPLILGGVTIAHHLGLDGHSDADVLTHALMDALLGALSLGDIGHYFPPSDARWQGADSLKLLAQVHQLILERGWRINNLDNVIVAEQPKLKPHIQAMKENLAKVLTIDPDLIGIKATTNERLGPTGREEGIAAYSVALLIKEG.

Aspartate 11 and histidine 13 together coordinate a divalent metal cation. Residues 11-13 (DIH) and 37-38 (HS) each bind 4-CDP-2-C-methyl-D-erythritol 2-phosphate. Residue histidine 45 coordinates a divalent metal cation. 4-CDP-2-C-methyl-D-erythritol 2-phosphate is bound by residues 59–61 (DIG), 135–138 (TTNE), and arginine 145.

This sequence belongs to the IspF family. Homotrimer. Requires a divalent metal cation as cofactor.

The catalysed reaction is 4-CDP-2-C-methyl-D-erythritol 2-phosphate = 2-C-methyl-D-erythritol 2,4-cyclic diphosphate + CMP. Its pathway is isoprenoid biosynthesis; isopentenyl diphosphate biosynthesis via DXP pathway; isopentenyl diphosphate from 1-deoxy-D-xylulose 5-phosphate: step 4/6. Functionally, involved in the biosynthesis of isopentenyl diphosphate (IPP) and dimethylallyl diphosphate (DMAPP), two major building blocks of isoprenoid compounds. Catalyzes the conversion of 4-diphosphocytidyl-2-C-methyl-D-erythritol 2-phosphate (CDP-ME2P) to 2-C-methyl-D-erythritol 2,4-cyclodiphosphate (ME-CPP) with a corresponding release of cytidine 5-monophosphate (CMP). This is 2-C-methyl-D-erythritol 2,4-cyclodiphosphate synthase from Synechocystis sp. (strain ATCC 27184 / PCC 6803 / Kazusa).